We begin with the raw amino-acid sequence, 132 residues long: uncharacterized protein (132 aa).

3 consecutive transmembrane segments (helical) span residues 28 to 48 (LLRLISLCIPIIRPFSFLIYP), 59 to 79 (ILPSILPIIPFAISSSLLFSY), and 106 to 126 (LLVASFVYLPYRSPLPVVIEI).

The protein localises to the membrane. This is an uncharacterized protein from Schizosaccharomyces pombe (strain 972 / ATCC 24843) (Fission yeast).